Here is a 274-residue protein sequence, read N- to C-terminus: uncharacterized protein (274 aa).

A compositionally biased stretch (low complexity) spans 1 to 17 (MTQLTNFSESFSNQNSN). Disordered stretches follow at residues 1–38 (MTQL…YYVR) and 222–274 (ELGT…MEFE). Residues 18 to 28 (LHQPYNFNSHQ) show a composition bias toward polar residues. Residues 29–38 (PPEENHYYVR) show a composition bias toward basic and acidic residues. 2 stretches are compositionally biased toward polar residues: residues 239–249 (PMASPTGSSQI) and 256–265 (SPNSLTNGSV).

This is an uncharacterized protein from Caenorhabditis elegans.